Here is a 399-residue protein sequence, read N- to C-terminus: S-adenosylmethionine synthase (399 aa).

His16 contributes to the ATP binding site. Position 18 (Asp18) interacts with Mg(2+). Residue Glu44 coordinates K(+). Positions 57 and 100 each coordinate L-methionine. A flexible loop region spans residues 100-110; that stretch reads QSSDIAQGVNE. ATP contacts are provided by residues 177–179, 244–245, Asp253, 259–260, Ala276, and Lys280; these read DAK, RF, and RK. Asp253 contacts L-methionine. Lys284 contacts L-methionine.

This sequence belongs to the AdoMet synthase family. In terms of assembly, homotetramer; dimer of dimers. Mg(2+) is required as a cofactor. Requires K(+) as cofactor.

Its subcellular location is the cytoplasm. It carries out the reaction L-methionine + ATP + H2O = S-adenosyl-L-methionine + phosphate + diphosphate. Its pathway is amino-acid biosynthesis; S-adenosyl-L-methionine biosynthesis; S-adenosyl-L-methionine from L-methionine: step 1/1. In terms of biological role, catalyzes the formation of S-adenosylmethionine (AdoMet) from methionine and ATP. The overall synthetic reaction is composed of two sequential steps, AdoMet formation and the subsequent tripolyphosphate hydrolysis which occurs prior to release of AdoMet from the enzyme. The protein is S-adenosylmethionine synthase of Lactococcus lactis subsp. cremoris (strain MG1363).